We begin with the raw amino-acid sequence, 600 residues long: DNA polymerase alpha subunit B (600 aa).

Residues 112–167 are disordered; that stretch reads AYTTPSKGPHKRVSSTPETPLTKRSISTRSPHQLLSPSSFSPSATPSQKYSSRTNR. Positions 125-140 are enriched in polar residues; that stretch reads SSTPETPLTKRSISTR. S126 is subject to Phosphoserine. T127 and T130 each carry phosphothreonine. Phosphoserine occurs at positions 141, 147, 152, and 154. Residues 141 to 158 are compositionally biased toward low complexity; that stretch reads SPHQLLSPSSFSPSATPS.

The protein belongs to the DNA polymerase alpha subunit B family. As to quaternary structure, component of the alpha DNA polymerase complex (also known as the alpha DNA polymerase-primase complex) consisting of four subunits: the catalytic subunit POLA1, the regulatory subunit POLA2, and the primase complex subunits PRIM1 and PRIM2 respectively. Within the complex, POLA1 directly interacts with PRIM2. In terms of processing, phosphorylated in a cell cycle-dependent manner, in G2/M phase.

The protein resides in the nucleus. Accessory subunit of the DNA polymerase alpha complex (also known as the alpha DNA polymerase-primase complex) which plays an essential role in the initiation of DNA synthesis. During the S phase of the cell cycle, the DNA polymerase alpha complex (composed of a catalytic subunit POLA1, an accessory subunit POLA2 and two primase subunits, the catalytic subunit PRIM1 and the regulatory subunit PRIM2) is recruited to DNA at the replicative forks via direct interactions with MCM10 and WDHD1. The primase subunit of the polymerase alpha complex initiates DNA synthesis by oligomerising short RNA primers on both leading and lagging strands. These primers are initially extended by the polymerase alpha catalytic subunit and subsequently transferred to polymerase delta and polymerase epsilon for processive synthesis on the lagging and leading strand, respectively. This Rattus norvegicus (Rat) protein is DNA polymerase alpha subunit B (Pola2).